A 510-amino-acid polypeptide reads, in one-letter code: ATP synthase subunit alpha (510 aa).

An ATP-binding site is contributed by 169-176; the sequence is GDRQTGKT.

The protein belongs to the ATPase alpha/beta chains family. In terms of assembly, F-type ATPases have 2 components, CF(1) - the catalytic core - and CF(0) - the membrane proton channel. CF(1) has five subunits: alpha(3), beta(3), gamma(1), delta(1), epsilon(1). CF(0) has four main subunits: a(1), b(1), b'(1) and c(9-12).

It localises to the cell inner membrane. The enzyme catalyses ATP + H2O + 4 H(+)(in) = ADP + phosphate + 5 H(+)(out). In terms of biological role, produces ATP from ADP in the presence of a proton gradient across the membrane. The alpha chain is a regulatory subunit. This is ATP synthase subunit alpha from Rhodopseudomonas palustris (strain BisB18).